The following is a 333-amino-acid chain: Lipoyl synthase (333 aa).

C55, C60, C66, C81, C85, C88, and S292 together coordinate [4Fe-4S] cluster. In terms of domain architecture, Radical SAM core spans W67–A281.

Belongs to the radical SAM superfamily. Lipoyl synthase family. [4Fe-4S] cluster serves as cofactor.

It is found in the cytoplasm. The catalysed reaction is [[Fe-S] cluster scaffold protein carrying a second [4Fe-4S](2+) cluster] + N(6)-octanoyl-L-lysyl-[protein] + 2 oxidized [2Fe-2S]-[ferredoxin] + 2 S-adenosyl-L-methionine + 4 H(+) = [[Fe-S] cluster scaffold protein] + N(6)-[(R)-dihydrolipoyl]-L-lysyl-[protein] + 4 Fe(3+) + 2 hydrogen sulfide + 2 5'-deoxyadenosine + 2 L-methionine + 2 reduced [2Fe-2S]-[ferredoxin]. It functions in the pathway protein modification; protein lipoylation via endogenous pathway; protein N(6)-(lipoyl)lysine from octanoyl-[acyl-carrier-protein]: step 2/2. Its function is as follows. Catalyzes the radical-mediated insertion of two sulfur atoms into the C-6 and C-8 positions of the octanoyl moiety bound to the lipoyl domains of lipoate-dependent enzymes, thereby converting the octanoylated domains into lipoylated derivatives. This is Lipoyl synthase from Kineococcus radiotolerans (strain ATCC BAA-149 / DSM 14245 / SRS30216).